Consider the following 206-residue polypeptide: Ribonuclease HII (206 aa).

Residues 18–206 (GRVAGVDEVG…PVREWLEANS (189 aa)) form the RNase H type-2 domain. A divalent metal cation is bound by residues aspartate 24, glutamate 25, and aspartate 116.

It belongs to the RNase HII family. The cofactor is Mn(2+). Mg(2+) is required as a cofactor.

The protein resides in the cytoplasm. The catalysed reaction is Endonucleolytic cleavage to 5'-phosphomonoester.. Its function is as follows. Endonuclease that specifically degrades the RNA of RNA-DNA hybrids. The protein is Ribonuclease HII of Shewanella amazonensis (strain ATCC BAA-1098 / SB2B).